The primary structure comprises 343 residues: Flavone 3'-O-methyltransferase OMT2 (343 aa).

Residue Asn107 coordinates (E)-ferulate. 6 residues coordinate S-adenosyl-L-homocysteine: Gly184, Asp207, Asp227, Met228, Met240, and Lys241. The active-site Proton acceptor is the His245. Residue Asp246 coordinates (E)-5-hydroxyferulate. Active-site residues include Glu273 and Glu305.

It belongs to the class I-like SAM-binding methyltransferase superfamily. Cation-independent O-methyltransferase family. COMT subfamily. Homodimer.

The catalysed reaction is (E)-5-hydroxyferulate + S-adenosyl-L-methionine = (E)-sinapate + S-adenosyl-L-homocysteine + H(+). The enzyme catalyses luteolin + S-adenosyl-L-methionine = chrysoeriol + S-adenosyl-L-homocysteine + H(+). It catalyses the reaction quercetin + S-adenosyl-L-methionine = isorhamnetin + S-adenosyl-L-homocysteine + H(+). It carries out the reaction (E)-caffeate + S-adenosyl-L-methionine = (E)-ferulate + S-adenosyl-L-homocysteine + H(+). The catalysed reaction is a 3'-hydroxyflavone + S-adenosyl-L-methionine = a 3'-methoxyflavone + S-adenosyl-L-homocysteine + H(+). Its pathway is flavonoid metabolism. Its function is as follows. Catalyzes the 3'-O-methylation of the flavonoids luteolin and quercetin. Catalyzes the 3- of 5-O-methylation of the phenylpropanoids caffeate and 5-hydroxyferulate. Substrate preference is 5-hydroxyferulate &gt; luteolin &gt; quercetin &gt; caffeate. Apigenin, kempferol and 3,4-dimethylquercetin do not seem to be substrates for methylation. The sequence is that of Flavone 3'-O-methyltransferase OMT2 from Chrysosplenium americanum (American golden saxifrage).